Consider the following 990-residue polypeptide: Protein SUPPRESSOR OF MAX2 1 (990 aa).

The Clp R domain maps to 8–167 (IQQTLTPEAA…KATIEQSLNN (160 aa)). Repeat stretches follow at residues 12–83 (LTPE…LERL) and 96–167 (ISNA…SLNN). Residues 818-855 (PKKEHGSGLSFDLNQAADTDDGSHNTSDLTTDNDQDEQ) are disordered. Residues 828–832 (FDLNQ) carry the EAR motif.

It belongs to the ClpA/ClpB family. As to quaternary structure, interacts probably with TPL/TPR in an EAR-motif dependent manner. Interacts with TPL, TPR1, TPR2 and TPR4. In terms of tissue distribution, highly expressed in dry seeds. Expressed in seedlings, rosette leaves and senescing leaves. Detected in roots and axillary shoots. Expressed in the primary rosette buds and expanding leaves of adult rosettes, the vasculature of the hypocotyls, cotyledons, and mature roots, in the midvein and petioles of young leaves, the young leaf periphery, stomata, and the root caps.

Its function is as follows. Probable component of a transcriptional corepressor complex that acts downstream of MAX2 to negatively regulate karrikins/strigolactone responses. Probable target of MAX2 during germination and seedling photomorphogenesis. Acts probably specifically in the karrikin pathway. The polypeptide is Protein SUPPRESSOR OF MAX2 1 (Arabidopsis thaliana (Mouse-ear cress)).